The chain runs to 443 residues: ATP-dependent protease ATPase subunit HslU (443 aa).

ATP-binding positions include I18, 60-65 (GVGKTE), D256, E321, and R393.

It belongs to the ClpX chaperone family. HslU subfamily. A double ring-shaped homohexamer of HslV is capped on each side by a ring-shaped HslU homohexamer. The assembly of the HslU/HslV complex is dependent on binding of ATP.

It is found in the cytoplasm. ATPase subunit of a proteasome-like degradation complex; this subunit has chaperone activity. The binding of ATP and its subsequent hydrolysis by HslU are essential for unfolding of protein substrates subsequently hydrolyzed by HslV. HslU recognizes the N-terminal part of its protein substrates and unfolds these before they are guided to HslV for hydrolysis. This Vibrio cholerae serotype O1 (strain ATCC 39315 / El Tor Inaba N16961) protein is ATP-dependent protease ATPase subunit HslU.